The primary structure comprises 71 residues: Small ribosomal subunit protein bS21 (71 aa).

It belongs to the bacterial ribosomal protein bS21 family.

The polypeptide is Small ribosomal subunit protein bS21 (Thioalkalivibrio sulfidiphilus (strain HL-EbGR7)).